A 318-amino-acid polypeptide reads, in one-letter code: Beta-galactosidase small subunit (318 aa).

The protein belongs to the bacterial beta-galactosidase small subunit family. In terms of assembly, heterodimer of a large (LacL) and a small subunit (LacM).

It carries out the reaction Hydrolysis of terminal non-reducing beta-D-galactose residues in beta-D-galactosides.. Functionally, component of a beta-galactosidase. The protein is Beta-galactosidase small subunit of Lactobacillus helveticus (Lactobacillus suntoryeus).